We begin with the raw amino-acid sequence, 138 residues long: ATP synthase epsilon chain (138 aa).

It belongs to the ATPase epsilon chain family. As to quaternary structure, F-type ATPases have 2 components, CF(1) - the catalytic core - and CF(0) - the membrane proton channel. CF(1) has five subunits: alpha(3), beta(3), gamma(1), delta(1), epsilon(1). CF(0) has three main subunits: a, b and c.

It is found in the cellular thylakoid membrane. Produces ATP from ADP in the presence of a proton gradient across the membrane. This Microcystis aeruginosa (strain NIES-843 / IAM M-2473) protein is ATP synthase epsilon chain.